The following is a 62-amino-acid chain: Photosystem II reaction center protein Z (62 aa).

2 helical membrane-spanning segments follow: residues 8 to 28 and 41 to 61; these read LVFILVIFSTLLVVGIPVTFA and YTGAGIWTGLVLITGLVNSFI.

It belongs to the PsbZ family. PSII is composed of 1 copy each of membrane proteins PsbA, PsbB, PsbC, PsbD, PsbE, PsbF, PsbH, PsbI, PsbJ, PsbK, PsbL, PsbM, PsbT, sbX, PsbY, PsbZ, Psb30/Ycf12, at least 3 peripheral proteins of the oxygen-evolving complex and a large number of cofactors. It forms dimeric complexes.

It is found in the plastid. It localises to the chloroplast thylakoid membrane. Functionally, may control the interaction of photosystem II (PSII) cores with the light-harvesting antenna, regulates electron flow through the 2 photosystem reaction centers. PSII is a light-driven water plastoquinone oxidoreductase, using light energy to abstract electrons from H(2)O, generating a proton gradient subsequently used for ATP formation. The protein is Photosystem II reaction center protein Z of Gracilaria tenuistipitata var. liui (Red alga).